The sequence spans 81 residues: MFPLVEFCISNMAKGSDVVFEKLENDPNIDVLEYGCLQNCGLCASSLYALVDGDIVEGNTPDDLLKNIYQHIEDNDITNLL.

This sequence belongs to the UPF0349 family.

In Staphylococcus epidermidis (strain ATCC 12228 / FDA PCI 1200), this protein is UPF0349 protein SE_0633.